We begin with the raw amino-acid sequence, 225 residues long: MEFPFDVDALLPERITVLDQHLRPPARRPGTTTPARVDLQQQIMTIVDELGKASAKAQHLPAPITSASRMQSNRHVMYILKDTSARPAGKGAIVGFLKVGYKKLFVLDDREAHNEVEPLCILDFYIHESLQRHGHGRELFQHMLQKERVEPHQLAIDRPSQKLLKFLNKHYNLETTVPQVNNFVIFEGFFAHQHPPARKLPPKRAEGDIKPYSSSDRESGLPQGW.

The region spanning 1–190 (MEFPFDVDAL…NNFVIFEGFF (190 aa)) is the N-acetyltransferase domain. Lysine 56 is modified (N6-acetyllysine; by autocatalysis). Residue 124-137 (FYIHESLQRHGHGR) participates in acetyl-CoA binding. Lysine 146 is modified (N6-acetyllysine; by autocatalysis). Acetyl-CoA is bound at residue 160–169 (SQKLLKFLNK). A disordered region spans residues 195 to 225 (PPARKLPPKRAEGDIKPYSSSDRESGLPQGW). A compositionally biased stretch (basic and acidic residues) spans 203–219 (KRAEGDIKPYSSSDRES). Residue lysine 210 is modified to N6-acetyllysine; by autocatalysis.

It belongs to the acetyltransferase ATAT1 family. As to quaternary structure, component of the BBSome complex. Interacts with AP2 alpha-adaptins, including AP2A2, but not with AP1 gamma-adaptin (AP1G1/AP1G2); this interaction is required for efficient alpha-tubulin acetylation, hence clathrin-coated pits are sites of microtubule acetylation. Autoacetylation strongly increases tubulin acetylation.

The protein resides in the cytoplasm. It is found in the membrane. Its subcellular location is the clathrin-coated pit. It localises to the cell junction. The protein localises to the focal adhesion. The protein resides in the cell projection. It is found in the axon. Its subcellular location is the cytoskeleton. It localises to the spindle. The enzyme catalyses L-lysyl-[alpha-tubulin] + acetyl-CoA = N(6)-acetyl-L-lysyl-[alpha-tubulin] + CoA + H(+). In terms of biological role, specifically acetylates 'Lys-40' in alpha-tubulin on the lumenal side of microtubules. Promotes microtubule destabilization and accelerates microtubule dynamics; this activity may be independent of acetylation activity. Acetylates alpha-tubulin with a slow enzymatic rate, due to a catalytic site that is not optimized for acetyl transfer. Enters the microtubule through each end and diffuses quickly throughout the lumen of microtubules. Acetylates only long/old microtubules because of its slow acetylation rate since it does not have time to act on dynamically unstable microtubules before the enzyme is released. Required for normal sperm flagellar function. Promotes directional cell locomotion and chemotaxis, through AP2A2-dependent acetylation of alpha-tubulin at clathrin-coated pits that are concentrated at the leading edge of migrating cells. May facilitate primary cilium assembly. The polypeptide is Alpha-tubulin N-acetyltransferase 1 (Bos taurus (Bovine)).